A 441-amino-acid polypeptide reads, in one-letter code: ATP-dependent RNA helicase sub2 (441 aa).

Residues 23 to 32 (TTAAPAANGD) are compositionally biased toward low complexity. The tract at residues 23-42 (TTAAPAANGDAAKKGDLTVS) is disordered. The Q motif signature appears at 58–86 (TGFRDFLLKGELLRAITDCGFEHPSEVQQ). Residues 89-264 (IPTAILNVDV…KKFMRNPLEV (176 aa)) form the Helicase ATP-binding domain. Residue 102–109 (AKSGLGKT) participates in ATP binding. The short motif at 211–214 (DECD) is the DECD box element. Positions 292 to 437 (KLNELLDSLE…EYPEGGVDSS (146 aa)) constitute a Helicase C-terminal domain.

This sequence belongs to the DEAD box helicase family. DECD subfamily.

It is found in the nucleus. The catalysed reaction is ATP + H2O = ADP + phosphate + H(+). Its function is as follows. ATP-binding RNA helicase involved in transcription elongation and required for the export of mRNA out of the nucleus. SUB2 also plays a role in pre-mRNA splicing and spliceosome assembly. May be involved in rDNA and telomeric silencing, and maintenance of genome integrity. The polypeptide is ATP-dependent RNA helicase sub2 (sub2) (Aspergillus oryzae (strain ATCC 42149 / RIB 40) (Yellow koji mold)).